The chain runs to 129 residues: Small ribosomal subunit protein uS11 (129 aa).

Belongs to the universal ribosomal protein uS11 family. As to quaternary structure, part of the 30S ribosomal subunit. Interacts with proteins S7 and S18. Binds to IF-3.

Located on the platform of the 30S subunit, it bridges several disparate RNA helices of the 16S rRNA. Forms part of the Shine-Dalgarno cleft in the 70S ribosome. The polypeptide is Small ribosomal subunit protein uS11 (Tolumonas auensis (strain DSM 9187 / NBRC 110442 / TA 4)).